A 315-amino-acid chain; its full sequence is Methionyl-tRNA formyltransferase (315 aa).

113–116 serves as a coordination point for (6S)-5,6,7,8-tetrahydrofolate; the sequence is SLLP.

Belongs to the Fmt family.

The enzyme catalyses L-methionyl-tRNA(fMet) + (6R)-10-formyltetrahydrofolate = N-formyl-L-methionyl-tRNA(fMet) + (6S)-5,6,7,8-tetrahydrofolate + H(+). Its function is as follows. Attaches a formyl group to the free amino group of methionyl-tRNA(fMet). The formyl group appears to play a dual role in the initiator identity of N-formylmethionyl-tRNA by promoting its recognition by IF2 and preventing the misappropriation of this tRNA by the elongation apparatus. This chain is Methionyl-tRNA formyltransferase, found in Enterobacter sp. (strain 638).